Here is a 222-residue protein sequence, read N- to C-terminus: 7-cyano-7-deazaguanine synthase (222 aa).

11–21 (FSGGQDSTTCL) serves as a coordination point for ATP. Positions 187, 195, 198, and 201 each coordinate Zn(2+).

It belongs to the QueC family. Zn(2+) is required as a cofactor.

It catalyses the reaction 7-carboxy-7-deazaguanine + NH4(+) + ATP = 7-cyano-7-deazaguanine + ADP + phosphate + H2O + H(+). The protein operates within purine metabolism; 7-cyano-7-deazaguanine biosynthesis. Functionally, catalyzes the ATP-dependent conversion of 7-carboxy-7-deazaguanine (CDG) to 7-cyano-7-deazaguanine (preQ(0)). This is 7-cyano-7-deazaguanine synthase from Actinobacillus pleuropneumoniae serotype 3 (strain JL03).